A 327-amino-acid polypeptide reads, in one-letter code: Leucotoxin LukDv (327 aa).

Residues 1–26 form the signal peptide; that stretch reads MKMKKLVKSSVASSIALLLLSNTVDA.

Belongs to the aerolysin family. Toxicity requires sequential binding and synergistic association of a class S and a class F component which form heterooligomeric complexes. LukEv (class S) associates with LukDv (class F).

It is found in the secreted. Its function is as follows. Part of a bi-component leucotoxin that acts by forming pores in the membrane of the target cells. The activity of LukEv-LukDv to rabbit leukocytes is similar to that of the Panton-Valentine leucocidin (PVL). LukEv-LukDv is hemolytic to rabbit red blood cells although the activity is only 8% of gamma-hemolysin. This is Leucotoxin LukDv (lukDv) from Staphylococcus aureus (strain NCTC 8325 / PS 47).